The sequence spans 350 residues: Bifunctional methylenetetrahydrofolate dehydrogenase/cyclohydrolase, mitochondrial (350 aa).

Residues 1–35 constitute a mitochondrion transit peptide; the sequence is MAAASFITSLVTRLLRSAQSGRLHQRPFHLSAVRN. Lys50 carries the N6-acetyllysine; alternate modification. Lys50 is covalently cross-linked (Glycyl lysine isopeptide (Lys-Gly) (interchain with G-Cter in SUMO2); alternate). Substrate contacts are provided by residues 84 to 88 and 131 to 133; these read YVLNK and VQL. Residues 200-202 and Arg233 each bind NAD(+); that span reads GRS. Substrate is bound at residue 309-313; it reads PGGVG.

This sequence belongs to the tetrahydrofolate dehydrogenase/cyclohydrolase family. In terms of assembly, homodimer. Mg(2+) is required as a cofactor.

It localises to the mitochondrion. The catalysed reaction is (6R)-5,10-methylene-5,6,7,8-tetrahydrofolate + NAD(+) = (6R)-5,10-methenyltetrahydrofolate + NADH. It catalyses the reaction (6R)-5,10-methenyltetrahydrofolate + H2O = (6R)-10-formyltetrahydrofolate + H(+). Functionally, although its dehydrogenase activity is NAD-specific, it can also utilize NADP at a reduced efficiency. The sequence is that of Bifunctional methylenetetrahydrofolate dehydrogenase/cyclohydrolase, mitochondrial (MTHFD2) from Bos taurus (Bovine).